A 162-amino-acid polypeptide reads, in one-letter code: 3-hydroxyacyl-[acyl-carrier-protein] dehydratase FabZ (162 aa).

His49 is a catalytic residue.

The protein belongs to the thioester dehydratase family. FabZ subfamily.

It localises to the cytoplasm. It carries out the reaction a (3R)-hydroxyacyl-[ACP] = a (2E)-enoyl-[ACP] + H2O. Involved in unsaturated fatty acids biosynthesis. Catalyzes the dehydration of short chain beta-hydroxyacyl-ACPs and long chain saturated and unsaturated beta-hydroxyacyl-ACPs. This chain is 3-hydroxyacyl-[acyl-carrier-protein] dehydratase FabZ, found in Solibacter usitatus (strain Ellin6076).